The sequence spans 177 residues: ATP-dependent protease subunit HslV (177 aa).

Thr-2 is an active-site residue. 3 residues coordinate Na(+): Ala-159, Asp-162, and Thr-165.

Belongs to the peptidase T1B family. HslV subfamily. In terms of assembly, a double ring-shaped homohexamer of HslV is capped on each side by a ring-shaped HslU homohexamer. The assembly of the HslU/HslV complex is dependent on binding of ATP.

The protein localises to the cytoplasm. It catalyses the reaction ATP-dependent cleavage of peptide bonds with broad specificity.. Its activity is regulated as follows. Allosterically activated by HslU binding. Its function is as follows. Protease subunit of a proteasome-like degradation complex believed to be a general protein degrading machinery. The polypeptide is ATP-dependent protease subunit HslV (Lactobacillus leichmannii).